Consider the following 230-residue polypeptide: Large ribosomal subunit protein uL1 (230 aa).

It belongs to the universal ribosomal protein uL1 family. Part of the 50S ribosomal subunit.

Its function is as follows. Binds directly to 23S rRNA. The L1 stalk is quite mobile in the ribosome, and is involved in E site tRNA release. In terms of biological role, protein L1 is also a translational repressor protein, it controls the translation of the L11 operon by binding to its mRNA. The sequence is that of Large ribosomal subunit protein uL1 from Leuconostoc citreum (strain KM20).